The sequence spans 149 residues: 3-hydroxyacyl-[acyl-carrier-protein] dehydratase FabZ (149 aa).

His-47 is an active-site residue.

The protein belongs to the thioester dehydratase family. FabZ subfamily.

Its subcellular location is the cytoplasm. It catalyses the reaction a (3R)-hydroxyacyl-[ACP] = a (2E)-enoyl-[ACP] + H2O. Involved in unsaturated fatty acids biosynthesis. Catalyzes the dehydration of short chain beta-hydroxyacyl-ACPs and long chain saturated and unsaturated beta-hydroxyacyl-ACPs. This Thioalkalivibrio sulfidiphilus (strain HL-EbGR7) protein is 3-hydroxyacyl-[acyl-carrier-protein] dehydratase FabZ.